Reading from the N-terminus, the 363-residue chain is S-adenosylmethionine:tRNA ribosyltransferase-isomerase (363 aa).

Belongs to the QueA family. Monomer.

It is found in the cytoplasm. The catalysed reaction is 7-aminomethyl-7-carbaguanosine(34) in tRNA + S-adenosyl-L-methionine = epoxyqueuosine(34) in tRNA + adenine + L-methionine + 2 H(+). It participates in tRNA modification; tRNA-queuosine biosynthesis. Functionally, transfers and isomerizes the ribose moiety from AdoMet to the 7-aminomethyl group of 7-deazaguanine (preQ1-tRNA) to give epoxyqueuosine (oQ-tRNA). The chain is S-adenosylmethionine:tRNA ribosyltransferase-isomerase from Magnetococcus marinus (strain ATCC BAA-1437 / JCM 17883 / MC-1).